Consider the following 395-residue polypeptide: Ribosomal RNA large subunit methyltransferase I (395 aa).

A PUA domain is found at 2–79 (SSRVTLHPGR…QNESVDNGFF (78 aa)).

It belongs to the methyltransferase superfamily. RlmI family.

It is found in the cytoplasm. It carries out the reaction cytidine(1962) in 23S rRNA + S-adenosyl-L-methionine = 5-methylcytidine(1962) in 23S rRNA + S-adenosyl-L-homocysteine + H(+). In terms of biological role, specifically methylates the cytosine at position 1962 (m5C1962) of 23S rRNA. The sequence is that of Ribosomal RNA large subunit methyltransferase I from Pseudoalteromonas atlantica (strain T6c / ATCC BAA-1087).